The following is a 144-amino-acid chain: MPLQIFNTTRKELHEELLERTVIDVLDSEGFGVESIVAVYCGKKMIRKINREFLQHDYATDTITFRYSDNREIDGEFYISLDVIEENARRFEVDFKLELLRVTIHSALHLIGYDDQTVDGRLQMQQKEEFYLNRYSEANNQTPS.

Zn(2+) is bound by residues histidine 105, histidine 109, and aspartate 115.

Belongs to the endoribonuclease YbeY family. Zn(2+) serves as cofactor.

Its subcellular location is the cytoplasm. Functionally, single strand-specific metallo-endoribonuclease involved in late-stage 70S ribosome quality control and in maturation of the 3' terminus of the 16S rRNA. This Chlorobium limicola (strain DSM 245 / NBRC 103803 / 6330) protein is Endoribonuclease YbeY.